The sequence spans 335 residues: LIM and SH3 domain protein F42H10.3 (335 aa).

The LIM zinc-binding domain occupies 5–65 (CAREDCGKTV…DPHYPKTVAS (61 aa)). Nebulin repeat units follow at residues 66-97 (VMAD…KMKG) and 98-132 (TKIE…QKAR). A compositionally biased stretch (basic and acidic residues) spans 128-142 (DQKARQEEVRPKEEI). Disordered stretches follow at residues 128 to 151 (DQKA…PTPI) and 233 to 264 (DFAG…ISPT). Low complexity predominate over residues 242-260 (SNSISSTSPHSTLSSPQST). Residues 266–327 (KAGFAVKAIY…PANYVQPHKL (62 aa)) form the SH3 domain.

The polypeptide is LIM and SH3 domain protein F42H10.3 (Caenorhabditis elegans).